Here is a 105-residue protein sequence, read N- to C-terminus: Small ribosomal subunit protein uS10 (105 aa).

It belongs to the universal ribosomal protein uS10 family. Part of the 30S ribosomal subunit.

Its function is as follows. Involved in the binding of tRNA to the ribosomes. This Gloeothece citriformis (strain PCC 7424) (Cyanothece sp. (strain PCC 7424)) protein is Small ribosomal subunit protein uS10.